Consider the following 264-residue polypeptide: Triosephosphate isomerase (264 aa).

Position 13–15 (13–15 (NWK)) interacts with substrate. Residue histidine 106 is the Electrophile of the active site. The active-site Proton acceptor is glutamate 179. Substrate contacts are provided by residues glycine 185, serine 223, and 244–245 (GG).

Belongs to the triosephosphate isomerase family. Homodimer.

The protein localises to the cytoplasm. The enzyme catalyses D-glyceraldehyde 3-phosphate = dihydroxyacetone phosphate. Its pathway is carbohydrate biosynthesis; gluconeogenesis. The protein operates within carbohydrate degradation; glycolysis; D-glyceraldehyde 3-phosphate from glycerone phosphate: step 1/1. In terms of biological role, involved in the gluconeogenesis. Catalyzes stereospecifically the conversion of dihydroxyacetone phosphate (DHAP) to D-glyceraldehyde-3-phosphate (G3P). In Acinetobacter baumannii (strain SDF), this protein is Triosephosphate isomerase.